Here is a 61-residue protein sequence, read N- to C-terminus: Large ribosomal subunit protein bL32 (61 aa).

Residues 1–22 show a composition bias toward basic residues; the sequence is MAVPKKKTSKSRRDMRRSHHAL. Positions 1–27 are disordered; that stretch reads MAVPKKKTSKSRRDMRRSHHALKPSAY.

This sequence belongs to the bacterial ribosomal protein bL32 family.

The polypeptide is Large ribosomal subunit protein bL32 (Rhodospirillum rubrum (strain ATCC 11170 / ATH 1.1.1 / DSM 467 / LMG 4362 / NCIMB 8255 / S1)).